The chain runs to 495 residues: UDP-N-acetylmuramoyl-L-alanyl-D-glutamate--2,6-diaminopimelate ligase (495 aa).

A UDP-N-acetyl-alpha-D-muramoyl-L-alanyl-D-glutamate-binding site is contributed by Ser29. 111-117 is an ATP binding site; the sequence is GTNGKTS. Residues 153–154, Ser180, Gln186, and Arg188 contribute to the UDP-N-acetyl-alpha-D-muramoyl-L-alanyl-D-glutamate site; that span reads TT. Residue Lys220 is modified to N6-carboxylysine. Residues Arg384, 408 to 411, Gly459, and Glu463 contribute to the meso-2,6-diaminopimelate site; that span reads DNPR. The Meso-diaminopimelate recognition motif signature appears at 408–411; sequence DNPR.

This sequence belongs to the MurCDEF family. MurE subfamily. Mg(2+) serves as cofactor. Carboxylation is probably crucial for Mg(2+) binding and, consequently, for the gamma-phosphate positioning of ATP.

The protein resides in the cytoplasm. The enzyme catalyses UDP-N-acetyl-alpha-D-muramoyl-L-alanyl-D-glutamate + meso-2,6-diaminopimelate + ATP = UDP-N-acetyl-alpha-D-muramoyl-L-alanyl-gamma-D-glutamyl-meso-2,6-diaminopimelate + ADP + phosphate + H(+). The protein operates within cell wall biogenesis; peptidoglycan biosynthesis. Catalyzes the addition of meso-diaminopimelic acid to the nucleotide precursor UDP-N-acetylmuramoyl-L-alanyl-D-glutamate (UMAG) in the biosynthesis of bacterial cell-wall peptidoglycan. This Xylella fastidiosa (strain 9a5c) protein is UDP-N-acetylmuramoyl-L-alanyl-D-glutamate--2,6-diaminopimelate ligase.